Consider the following 204-residue polypeptide: MPSFLRGILKPKERHHENKNHSQVSSDSLTSSYPTSPPKLEKTEAGSMVSSTTQKKTSHHAKPTITTKTEQSQRRPKIIDQVRRVESLGEQVSQKQRHMLDSLINKVYTGPLGEELVQTLYLRIWAMKETPESMKILQMREDIRDQYLRMKTERWLRTLIRGKKTKLRDFQKRYEEVHPYLMMERVEQIIMEEAWKLAAHIVQE.

Residues Met-1–Ile-78 are disordered. Residues Lys-10–Asn-20 are compositionally biased toward basic and acidic residues. Residues Ser-25–Pro-34 are compositionally biased toward low complexity.

The protein belongs to the respirovirus protein C family.

In Homo sapiens (Human), this protein is Protein C (P/V/C).